A 486-amino-acid chain; its full sequence is Malonate-semialdehyde dehydrogenase (486 aa).

Positions 154, 178, 181, 182, and 231 each coordinate NAD(+). Residue cysteine 286 is the Nucleophile of the active site. Glutamate 386 contributes to the NAD(+) binding site.

This sequence belongs to the aldehyde dehydrogenase family. IolA subfamily. Homotetramer.

It catalyses the reaction 3-oxopropanoate + NAD(+) + CoA + H2O = hydrogencarbonate + acetyl-CoA + NADH + H(+). It carries out the reaction 2-methyl-3-oxopropanoate + NAD(+) + CoA + H2O = propanoyl-CoA + hydrogencarbonate + NADH + H(+). It participates in polyol metabolism; myo-inositol degradation into acetyl-CoA; acetyl-CoA from myo-inositol: step 7/7. Catalyzes the oxidation of malonate semialdehyde (MSA) and methylmalonate semialdehyde (MMSA) into acetyl-CoA and propanoyl-CoA, respectively. Is involved in a myo-inositol catabolic pathway. Bicarbonate, and not CO2, is the end-product of the enzymatic reaction. The sequence is that of Malonate-semialdehyde dehydrogenase from Bacillus cereus (strain B4264).